The following is a 233-amino-acid chain: Large ribosomal subunit protein uL1 (233 aa).

This sequence belongs to the universal ribosomal protein uL1 family. In terms of assembly, part of the 50S ribosomal subunit.

Binds directly to 23S rRNA. The L1 stalk is quite mobile in the ribosome, and is involved in E site tRNA release. Its function is as follows. Protein L1 is also a translational repressor protein, it controls the translation of the L11 operon by binding to its mRNA. The polypeptide is Large ribosomal subunit protein uL1 (Rhodospirillum rubrum (strain ATCC 11170 / ATH 1.1.1 / DSM 467 / LMG 4362 / NCIMB 8255 / S1)).